The chain runs to 510 residues: Aspartate kinase FUB3 (510 aa).

2 consecutive ACT domains span residues 372–440 (ILSN…VLPD) and 446–510 (LVGA…KNAM).

It belongs to the aspartokinase family.

The catalysed reaction is L-aspartate + ATP = 4-phospho-L-aspartate + ADP. It functions in the pathway mycotoxin biosynthesis. Aspartate kinase; part of the gene cluster that mediates the biosynthesis of fusaric acid, a mycotoxin with low to moderate toxicity to animals and humans, but with high phytotoxic properties. L-aspartate is suggested as fusaric acid amino acid precursor that is activated and further processed to O-acetyl-L-homoserine by cluster enzymes aspartate kinase FUB3 and homoserine O-acetyltransferase FUB5, as well as enzymes of the primary metabolism. The polyketide synthase (PKS) FUB1 generates the triketide trans-2-hexenal which is presumptively released by the hydrolase FUB4 and linked to the NRPS-bound amino acid precursor by NAD(P)-dependent dehydrogenase FUB6. FUB1, FUB4, and the non-canonical NRPS Fub8 may form an enzyme complex. Further processing of the NRPS-bound intermediate might be carried out by FUB6 and the sulfhydrylase FUB7, enabling a spontaneous electrocyclization to close the carbon backbone of fusaric acid. Dihydrofusaric acid is likely to be released via reduction by the thioester reductase (TR) domain of FUB8 whereupon the final oxidation to fusaric acid may (also) be performed by the FMN-dependent dehydrogenase FUB9. The sequence is that of Aspartate kinase FUB3 from Gibberella moniliformis (strain M3125 / FGSC 7600) (Maize ear and stalk rot fungus).